The primary structure comprises 197 residues: Adenylyl-sulfate kinase (197 aa).

An ATP-binding site is contributed by 33 to 40 (GLSGSGKS). S107 (phosphoserine intermediate) is an active-site residue.

Belongs to the APS kinase family.

It catalyses the reaction adenosine 5'-phosphosulfate + ATP = 3'-phosphoadenylyl sulfate + ADP + H(+). It participates in sulfur metabolism; hydrogen sulfide biosynthesis; sulfite from sulfate: step 2/3. Its function is as follows. Catalyzes the synthesis of activated sulfate. In Bacillus velezensis (strain DSM 23117 / BGSC 10A6 / LMG 26770 / FZB42) (Bacillus amyloliquefaciens subsp. plantarum), this protein is Adenylyl-sulfate kinase.